The chain runs to 417 residues: NADH-quinone oxidoreductase subunit D (417 aa).

Belongs to the complex I 49 kDa subunit family. As to quaternary structure, NDH-1 is composed of 14 different subunits. Subunits NuoB, C, D, E, F, and G constitute the peripheral sector of the complex.

The protein resides in the cell inner membrane. It carries out the reaction a quinone + NADH + 5 H(+)(in) = a quinol + NAD(+) + 4 H(+)(out). Functionally, NDH-1 shuttles electrons from NADH, via FMN and iron-sulfur (Fe-S) centers, to quinones in the respiratory chain. The immediate electron acceptor for the enzyme in this species is believed to be ubiquinone. Couples the redox reaction to proton translocation (for every two electrons transferred, four hydrogen ions are translocated across the cytoplasmic membrane), and thus conserves the redox energy in a proton gradient. The protein is NADH-quinone oxidoreductase subunit D of Burkholderia ambifaria (strain MC40-6).